Reading from the N-terminus, the 100-residue chain is NADH-quinone oxidoreductase subunit K (100 aa).

The next 3 helical transmembrane spans lie at 4 to 24 (LSYS…GIMI), 29 to 49 (LFLL…FVIV), and 60 to 80 (VMYI…LALL).

This sequence belongs to the complex I subunit 4L family. As to quaternary structure, NDH-1 is composed of 14 different subunits. Subunits NuoA, H, J, K, L, M, N constitute the membrane sector of the complex.

The protein resides in the cell membrane. It catalyses the reaction a quinone + NADH + 5 H(+)(in) = a quinol + NAD(+) + 4 H(+)(out). In terms of biological role, NDH-1 shuttles electrons from NADH, via FMN and iron-sulfur (Fe-S) centers, to quinones in the respiratory chain. The immediate electron acceptor for the enzyme in this species is believed to be ubiquinone. Couples the redox reaction to proton translocation (for every two electrons transferred, four hydrogen ions are translocated across the cytoplasmic membrane), and thus conserves the redox energy in a proton gradient. The sequence is that of NADH-quinone oxidoreductase subunit K from Baumannia cicadellinicola subsp. Homalodisca coagulata.